The following is a 496-amino-acid chain: Membrane-bound lytic murein transglycosylase F (496 aa).

Positions 1–31 (MPIFSTRVLTYLRCIFRLFIGLTLLLTLVGC) are cleaved as a signal peptide. Residues 32 to 271 (DFYTPSSQLE…KLDEKYFGHV (240 aa)) form a non-LT domain region. An LT domain region spans residues 273–496 (NFDFVDTRTF…AEVVKQITLR (224 aa)). Glu-316 is an active-site residue. The tract at residues 464-486 (HRREELDDDDSSEPPSAERPTVI) is disordered.

It in the N-terminal section; belongs to the bacterial solute-binding protein 3 family. This sequence in the C-terminal section; belongs to the transglycosylase Slt family.

The protein resides in the cell outer membrane. It catalyses the reaction Exolytic cleavage of the (1-&gt;4)-beta-glycosidic linkage between N-acetylmuramic acid (MurNAc) and N-acetylglucosamine (GlcNAc) residues in peptidoglycan, from either the reducing or the non-reducing ends of the peptidoglycan chains, with concomitant formation of a 1,6-anhydrobond in the MurNAc residue.. Functionally, murein-degrading enzyme that degrades murein glycan strands and insoluble, high-molecular weight murein sacculi, with the concomitant formation of a 1,6-anhydromuramoyl product. Lytic transglycosylases (LTs) play an integral role in the metabolism of the peptidoglycan (PG) sacculus. Their lytic action creates space within the PG sacculus to allow for its expansion as well as for the insertion of various structures such as secretion systems and flagella. The polypeptide is Membrane-bound lytic murein transglycosylase F (Aeromonas hydrophila subsp. hydrophila (strain ATCC 7966 / DSM 30187 / BCRC 13018 / CCUG 14551 / JCM 1027 / KCTC 2358 / NCIMB 9240 / NCTC 8049)).